A 943-amino-acid polypeptide reads, in one-letter code: Translation initiation factor IF-2 (943 aa).

Residues 35-359 (MSSIDQDQEA…MPQRKERPLP (325 aa)) form a disordered region. Residues 57–76 (KAPSSQAAKTPAKAAKTSSA) show a composition bias toward low complexity. 2 stretches are compositionally biased toward basic and acidic residues: residues 92-103 (SNDHADAAEHSQ) and 110-124 (AKQE…KTSD). Residues 130-141 (SKSTILRPRSTQ) are compositionally biased toward polar residues. Residues 142–190 (TAHTNTNHNRGGNTASANNTANGRNSNRSNNNNNNRSANNANRSGNNNR) are compositionally biased toward low complexity. 3 stretches are compositionally biased toward basic and acidic residues: residues 191 to 205 (SNER…RFDN), 239 to 250 (ASERQQPKRQEA), and 259 to 271 (KRSE…RPRT). Low complexity-rich tracts occupy residues 289–299 (PAAAAPKPASA) and 315–330 (NFGR…GFNR). Residues 331–342 (NNRRNKKNKRRQ) are compositionally biased toward basic residues. A compositionally biased stretch (basic and acidic residues) spans 346–358 (PKKEMPQRKERPL). Positions 444 to 613 (PRPPVVTIMG…LLEADVLELK (170 aa)) constitute a tr-type G domain. The G1 stretch occupies residues 453–460 (GHVDHGKT). Position 453–460 (453–460 (GHVDHGKT)) interacts with GTP. Residues 478 to 482 (GITQH) form a G2 region. The tract at residues 499 to 502 (DTPG) is G3. Residues 499-503 (DTPGH) and 553-556 (NKID) contribute to the GTP site. The G4 stretch occupies residues 553 to 556 (NKID). A G5 region spans residues 589 to 591 (SAK).

It belongs to the TRAFAC class translation factor GTPase superfamily. Classic translation factor GTPase family. IF-2 subfamily.

Its subcellular location is the cytoplasm. Its function is as follows. One of the essential components for the initiation of protein synthesis. Protects formylmethionyl-tRNA from spontaneous hydrolysis and promotes its binding to the 30S ribosomal subunits. Also involved in the hydrolysis of GTP during the formation of the 70S ribosomal complex. The polypeptide is Translation initiation factor IF-2 (Lacticaseibacillus paracasei (strain ATCC 334 / BCRC 17002 / CCUG 31169 / CIP 107868 / KCTC 3260 / NRRL B-441) (Lactobacillus paracasei)).